Reading from the N-terminus, the 1197-residue chain is Probable DNA polymerase (1197 aa).

Belongs to the DNA polymerase type-B family.

The protein resides in the mitochondrion. It carries out the reaction DNA(n) + a 2'-deoxyribonucleoside 5'-triphosphate = DNA(n+1) + diphosphate. The chain is Probable DNA polymerase from Podospora anserina (Pleurage anserina).